Here is a 927-residue protein sequence, read N- to C-terminus: DIS3-like exonuclease 2 (927 aa).

Over residues 1 to 12 (MDLKPNIRRKEK) the composition is skewed to basic residues. The disordered stretch occupies residues 1 to 168 (MDLKPNIRRK…DTNNATEMVS (168 aa)). Positions 13–31 (RNLLKGEAALEKKGSIDRK) are enriched in basic and acidic residues. Positions 97 to 106 (VKPKAKKKNS) are enriched in basic residues. The span at 107–152 (KEKISKSSKQDEHKTDVHKESVSKLSKNLESRNNRDENSAKREKNN) shows a compositional bias: basic and acidic residues. Polar residues predominate over residues 153–168 (SHQVEADTNNATEMVS). 2 residues coordinate Mg(2+): Asp453 and Asp462.

The protein belongs to the RNR ribonuclease family. DIS3L2 subfamily. Requires Mg(2+) as cofactor. The cofactor is Mn(2+).

It is found in the cytoplasm. The protein localises to the P-body. In terms of biological role, 3'-5'-exoribonuclease that specifically recognizes RNAs polyuridylated at their 3' end and mediates their degradation. Component of an exosome-independent RNA degradation pathway that mediates degradation of cytoplasmic mRNAs that have been deadenylated and subsequently uridylated at their 3'. In Schizosaccharomyces pombe (strain 972 / ATCC 24843) (Fission yeast), this protein is DIS3-like exonuclease 2 (dis32).